The primary structure comprises 485 residues: Sodium-coupled neutral amino acid symporter 1 (485 aa).

Topologically, residues 1–74 (MMHFKSGLEL…EYIPGTTSLG (74 aa)) are cytoplasmic. S6 carries the post-translational modification Phosphoserine. A Phosphothreonine modification is found at T11. Residues S25, S28, S49, and S52 each carry the phosphoserine modification. T54 bears the Phosphothreonine mark. The residue at position 56 (S56) is a Phosphoserine. The helical transmembrane segment at 75 to 97 (MSVFNLSNAIMGSGILGLAFALA) threads the bilayer. The Extracellular portion of the chain corresponds to 98 to 112 (NTGILLFLILLTSVT). Residues 113–133 (LLSIYSINLLLICSKETGCMV) traverse the membrane as a helical segment. The Cytoplasmic portion of the chain corresponds to 134-148 (YEKLGEQVFGTTGKL). The helical transmembrane segment at 149–169 (VIFGATSLQNTGAMLSYLFIV) threads the bilayer. Residues 170–188 (KNELPSAIKSLMGEEDAFS) lie on the Extracellular side of the membrane. A helical membrane pass occupies residues 189–211 (AWYVDGRVLVVMVTFGIILPLCL). Residues 212-216 (LKNLG) lie on the Cytoplasmic side of the membrane. The chain crosses the membrane as a helical span at residues 217-237 (YLGYTSGFSLSCMMFFLIVVI). Over 238-273 (YKKFQTPCMSVEQNSTVSANVTDACTPKYVTFNSKT) the chain is Extracellular. The cysteines at positions 245 and 262 are disulfide-linked. 2 N-linked (GlcNAc...) asparagine glycosylation sites follow: N251 and N257. A helical membrane pass occupies residues 274 to 294 (VYALPTIAFAFVCHPSVLPIY). Residues 295 to 310 (SELKDRSQKKMQMVSN) are Cytoplasmic-facing. Residues 311-331 (ISFFAMFVMYFLTAIFGYLTF) traverse the membrane as a helical segment. Topologically, residues 332–348 (YEKVQSDLLHKYQSTGD) are extracellular. A helical transmembrane segment spans residues 349 to 369 (ILILTVRLAVIVAVILTVPVL). Over 370–391 (FFTVRSSLFELAKKTKFHLCRH) the chain is Cytoplasmic. The helical transmembrane segment at 392-412 (VLVTIILLIIINLLVIFIPSM) threads the bilayer. The Extracellular segment spans residues 413–414 (KD). A helical membrane pass occupies residues 415-435 (IFGVVGVTSANMLIFILPSSL). At 436–450 (YLKITNQDGDKGTQR) the chain is on the cytoplasmic side. A helical membrane pass occupies residues 451–471 (IWAALFLGLGVLFSLISIPLV). Over 472–485 (IYDWACSSGTDEGH) the chain is Extracellular.

It belongs to the amino acid/polyamine transporter 2 family. N-glycosylation plays an important role in the L-glutamine transport. As to expression, specifically expressed in brain and retina (at protein level). Also detected in spleen, small intestine and lung.

Its subcellular location is the cell membrane. The enzyme catalyses L-glutamine(in) + Na(+)(in) = L-glutamine(out) + Na(+)(out). The catalysed reaction is L-alanine(in) + Na(+)(in) = L-alanine(out) + Na(+)(out). It catalyses the reaction L-histidine(in) + Na(+)(in) = L-histidine(out) + Na(+)(out). It carries out the reaction L-asparagine(in) + Na(+)(in) = L-asparagine(out) + Na(+)(out). The enzyme catalyses L-serine(in) + Na(+)(in) = L-serine(out) + Na(+)(out). The catalysed reaction is L-cysteine(in) + Na(+)(in) = L-cysteine(out) + Na(+)(out). It catalyses the reaction L-methionine(in) + Na(+)(in) = L-methionine(out) + Na(+)(out). It carries out the reaction glycine(in) + Na(+)(in) = glycine(out) + Na(+)(out). The enzyme catalyses L-threonine(in) + Na(+)(in) = L-threonine(out) + Na(+)(out). The catalysed reaction is L-proline(in) + Na(+)(in) = L-proline(out) + Na(+)(out). With respect to regulation, inhibited by alpha-(methylamino)isobutyric acid (MeAIB). Inhibited by lithium, potassium, choline ions, N-methylglucamine. The pH dependence has an allosteric effect on the transport. Functionally, symporter that cotransports short-chain neutral amino acids and sodium ions from the extraccellular to the intracellular side of the cell membrane. The transport is elctrogenic, pH dependent and driven by the Na(+) electrochemical gradient. Participates in the astroglia-derived glutamine transport into GABAergic interneurons for neurotransmitter GABA de novo synthesis. May also contributes to amino acid transport in placental trophoblast. Regulates synaptic plasticity. This is Sodium-coupled neutral amino acid symporter 1 from Mus musculus (Mouse).